The sequence spans 419 residues: Esterase FrsA (419 aa).

The protein belongs to the FrsA family.

The enzyme catalyses a carboxylic ester + H2O = an alcohol + a carboxylate + H(+). Catalyzes the hydrolysis of esters. In Photobacterium profundum (strain SS9), this protein is Esterase FrsA.